The following is a 773-amino-acid chain: Cadherin-5 (773 aa).

Positions Met-1–Tyr-18 are cleaved as a signal peptide. A propeptide spanning residues Lys-19–Arg-40 is cleaved from the precursor. 3 N-linked (GlcNAc...) asparagine glycosylation sites follow: Asn-27, Asn-31, and Asn-32. Cadherin domains follow at residues Lys-39–Phe-144, Val-145–Phe-251, Lys-252–Phe-366, Thr-367–Leu-474, and Leu-474–Phe-582. At Asp-41–Gln-595 the chain is on the extracellular side. Residues Glu-51, Glu-52, Asp-102, and Glu-104 each contribute to the Ca(2+) site. Residue Asn-121 is glycosylated (N-linked (GlcNAc...) asparagine). Positions 136, 137, 138, 139, and 140 each coordinate Ca(2+). N-linked (GlcNAc...) asparagine glycosylation occurs at Asn-150. Ca(2+) contacts are provided by Asp-170, Asp-172, His-179, and Asp-224. Asn-263, Asn-437, Asn-519, and Asn-531 each carry an N-linked (GlcNAc...) asparagine glycan. A helical transmembrane segment spans residues Ala-596–Leu-617. Residues Arg-618–Tyr-773 are Cytoplasmic-facing.

N-glycosylated. Post-translationally, O-glycosylated.

It localises to the cell junction. It is found in the adherens junction. The protein localises to the cell membrane. The protein resides in the cytoplasm. Cadherins are calcium-dependent cell adhesion proteins. They preferentially interact with themselves in a homophilic manner in connecting cells; cadherins may thus contribute to the sorting of heterogeneous cell types. This cadherin may play a important role in endothelial cell biology through control of the cohesion and organization of the intercellular junctions. Plays a role in coupling actin fibers to cell junctions in endothelial cells. Associates with CTNND1/p120-catenin to control CADH5 endocytosis. This is Cadherin-5 from Gallus gallus (Chicken).